A 368-amino-acid chain; its full sequence is Dihydroorotate dehydrogenase (quinone) (368 aa).

Residues 67-71 (AGFDK) and Thr-91 contribute to the FMN site. Residue Lys-71 participates in substrate binding. Residue 116-120 (NRMGF) coordinates substrate. Positions 146 and 179 each coordinate FMN. Asn-179 contacts substrate. Ser-182 functions as the Nucleophile in the catalytic mechanism. Residue Asn-184 participates in substrate binding. Residues Lys-222 and Thr-250 each coordinate FMN. 251–252 (NT) lines the substrate pocket. FMN is bound by residues Gly-276, Gly-305, and 326-327 (YS).

The protein belongs to the dihydroorotate dehydrogenase family. Type 2 subfamily. Monomer. FMN serves as cofactor.

It localises to the cell membrane. It carries out the reaction (S)-dihydroorotate + a quinone = orotate + a quinol. It participates in pyrimidine metabolism; UMP biosynthesis via de novo pathway; orotate from (S)-dihydroorotate (quinone route): step 1/1. Catalyzes the conversion of dihydroorotate to orotate with quinone as electron acceptor. The sequence is that of Dihydroorotate dehydrogenase (quinone) from Streptomyces avermitilis (strain ATCC 31267 / DSM 46492 / JCM 5070 / NBRC 14893 / NCIMB 12804 / NRRL 8165 / MA-4680).